The sequence spans 59 residues: Temperature acclimation protein A (59 aa).

In terms of domain architecture, CSD spans 1–55; it reads FNDEKGFGFITPESGPDLFVHFRAIQGNGFKSLKEGQKVTFIAVQGQKGMQADKV.

The protein localises to the cytoplasm. Affects cell viability at low temperatures. In Pseudomonas fragi, this protein is Temperature acclimation protein A (tapA).